The sequence spans 212 residues: Interleukin-6 (212 aa).

Residues 1–29 form the signal peptide; it reads MNSLSTSAFSPVAFSLGLLLVMATAFPTP. Cysteine 72 and cysteine 78 are disulfide-bonded. At serine 81 the chain carries Phosphoserine. Cysteine 101 and cysteine 111 are disulfide-bonded. Residues 156-175 are disordered; sequence QKGKNPDKATTPNPTTNAGL. A compositionally biased stretch (polar residues) spans 163–175; sequence KATTPNPTTNAGL.

Belongs to the IL-6 superfamily. Component of a hexamer of two molecules each of IL6, IL6R and IL6ST; first binds to IL6R to associate with the signaling subunit IL6ST. Interacts with IL6R (via the N-terminal ectodomain); this interaction may be affected by IL6R-binding with SORL1, hence decreasing IL6 cis signaling. Interacts with SORL1 (via the N-terminal ectodomain); this interaction leads to IL6 internalization and lysosomal degradation. May form a trimeric complex with the soluble SORL1 ectodomain and soluble IL6R receptor; this interaction might stabilize circulating IL6, hence promoting IL6 trans signaling.

Its subcellular location is the secreted. Cytokine with a wide variety of biological functions in immunity, tissue regeneration, and metabolism. Binds to IL6R, then the complex associates to the signaling subunit IL6ST/gp130 to trigger the intracellular IL6-signaling pathway. The interaction with the membrane-bound IL6R and IL6ST stimulates 'classic signaling', whereas the binding of IL6 and soluble IL6R to IL6ST stimulates 'trans-signaling'. Alternatively, 'cluster signaling' occurs when membrane-bound IL6:IL6R complexes on transmitter cells activate IL6ST receptors on neighboring receiver cells. Functionally, IL6 is a potent inducer of the acute phase response. Rapid production of IL6 contributes to host defense during infection and tissue injury, but excessive IL6 synthesis is involved in disease pathology. In the innate immune response, is synthesized by myeloid cells, such as macrophages and dendritic cells, upon recognition of pathogens through toll-like receptors (TLRs) at the site of infection or tissue injury. In the adaptive immune response, is required for the differentiation of B cells into immunoglobulin-secreting cells. Plays a major role in the differentiation of CD4(+) T cell subsets. Essential factor for the development of T follicular helper (Tfh) cells that are required for the induction of germinal-center formation. Required to drive naive CD4(+) T cells to the Th17 lineage. Also required for proliferation of myeloma cells and the survival of plasmablast cells. In terms of biological role, acts as an essential factor in bone homeostasis and on vessels directly or indirectly by induction of VEGF, resulting in increased angiogenesis activity and vascular permeability. Induces, through 'trans-signaling' and synergistically with IL1B and TNF, the production of VEGF. Involved in metabolic controls, is discharged into the bloodstream after muscle contraction increasing lipolysis and improving insulin resistance. 'Trans-signaling' in central nervous system also regulates energy and glucose homeostasis. Mediates, through GLP-1, crosstalk between insulin-sensitive tissues, intestinal L cells and pancreatic islets to adapt to changes in insulin demand. Also acts as a myokine. Plays a protective role during liver injury, being required for maintenance of tissue regeneration. Also has a pivotal role in iron metabolism by regulating HAMP/hepcidin expression upon inflammation or bacterial infection. Through activation of IL6ST-YAP-NOTCH pathway, induces inflammation-induced epithelial regeneration. In Sus scrofa (Pig), this protein is Interleukin-6 (IL6).